Here is a 134-residue protein sequence, read N- to C-terminus: Phosphomevalonate dehydratase small subunit (134 aa).

The Proton acceptor role is filled by serine 62.

Belongs to the AcnX type II small subunit family. As to quaternary structure, heterodimer composed of a large subunit (PMDh-L) and a small subunit (PMDh-S).

The enzyme catalyses (R)-5-phosphomevalonate = (2E)-3-methyl-5-phosphooxypent-2-enoate + H2O. It functions in the pathway isoprenoid biosynthesis; isopentenyl diphosphate biosynthesis via mevalonate pathway. Component of a hydro-lyase that catalyzes the dehydration of mevalonate 5-phosphate (MVA5P) to form trans-anhydromevalonate 5-phosphate (tAHMP). Involved in the archaeal mevalonate (MVA) pathway, which provides fundamental precursors for isoprenoid biosynthesis, such as isopentenyl diphosphate (IPP) and dimethylallyl diphosphate (DMAPP). In Pyrococcus furiosus (strain ATCC 43587 / DSM 3638 / JCM 8422 / Vc1), this protein is Phosphomevalonate dehydratase small subunit.